A 394-amino-acid polypeptide reads, in one-letter code: MTTRKRQIKNFTLNFGPQHPAAHGVLRLVLEMNGEVVERAEPHIGLLHRGTEKLIEYKTYLQALPYFDRLDYVSMMAQEHAYSLAVEKLLNCEVPLRAQYIRVLFCEITRILNHLLALTTHAMDVGALTPFLWAFEEREKLLEFYERVSGARMHASFIRPGGVAQDLPLGLCRDIDSFTQQFASRIDELEEMLTGNRIWKQRLVDIGTVTAQQAKDWGFSGVMLRGSGVCWDLRRAAPYDVYDQLDFDVPVGTRGDCYDRYCIRIEEMRQSLRIIVQCLNQMPSGMIKADDRKLCPPSRCRMKLSMESLIHHFELYTEGFSVPASSTYTAVEAPKGEFGVFLVSNGSNRPYRCKIRAPGFAHLQGLDFMSKHHMLADVVTIIGTQDIVFGEVDR.

Belongs to the complex I 49 kDa subunit family. As to quaternary structure, complex I is composed of at least 49 different subunits. This is a component of the iron-sulfur (IP) fragment of the enzyme.

The protein localises to the mitochondrion. It catalyses the reaction a ubiquinone + NADH + 5 H(+)(in) = a ubiquinol + NAD(+) + 4 H(+)(out). Functionally, core subunit of the mitochondrial membrane respiratory chain NADH dehydrogenase (Complex I) that is believed to belong to the minimal assembly required for catalysis. Complex I functions in the transfer of electrons from NADH to the respiratory chain. The immediate electron acceptor for the enzyme is believed to be ubiquinone. Component of the iron-sulfur (IP) fragment of the enzyme. The chain is NADH dehydrogenase [ubiquinone] iron-sulfur protein 2 (NAD7) from Arabidopsis thaliana (Mouse-ear cress).